A 113-amino-acid chain; its full sequence is Iron-sulfur cluster insertion protein ErpA (113 aa).

Positions 41, 105, and 107 each coordinate iron-sulfur cluster.

It belongs to the HesB/IscA family. Homodimer. It depends on iron-sulfur cluster as a cofactor.

Its function is as follows. Required for insertion of 4Fe-4S clusters for at least IspG. In Photobacterium profundum (strain SS9), this protein is Iron-sulfur cluster insertion protein ErpA.